Consider the following 428-residue polypeptide: Lysophosphatidic acid phosphatase type 6 (428 aa).

A mitochondrion-targeting transit peptide spans M1 to A32. Residues R58–R168 form a substrate binding region. H59 serves as the catalytic Nucleophile. The active-site Proton donor is the D335.

The protein belongs to the histidine acid phosphatase family. Monomer.

It localises to the mitochondrion. The enzyme catalyses a phosphate monoester + H2O = an alcohol + phosphate. It carries out the reaction 1-(9Z-octadecenoyl)-sn-glycero-3-phosphate + H2O = 1-(9Z-octadecenoyl)-sn-glycerol + phosphate. In terms of biological role, hydrolyzes lysophosphatidic acid (LPA) containing a medium length fatty acid chain to the corresponding monoacylglycerol. Has highest activity with lysophosphatidic acid containing myristate (C14:0), monounsaturated oleate (C18:1) or palmitate (C16:0), and lower activity with C18:0 and C6:0 lysophosphatidic acid. In Pongo abelii (Sumatran orangutan), this protein is Lysophosphatidic acid phosphatase type 6 (ACP6).